A 133-amino-acid polypeptide reads, in one-letter code: MRKHVLAASFSMLSLLVIMGDTDSKTDSSFIMDSDPRRCMRHHYVDSISHPLYKCSSKMVLLARCEGHCSQASRSEPLVSFSTVLKQPFRSSCHCCRPQTSKLKALRLRCSGGMRLTATYRYILSCHCEECNS.

The first 24 residues, methionine 1–serine 24, serve as a signal peptide directing secretion. 4 disulfide bridges follow: cysteine 39–cysteine 96, cysteine 55–cysteine 110, cysteine 65–cysteine 126, and cysteine 69–cysteine 128. Residues cysteine 39–asparagine 132 form the CTCK domain.

In terms of assembly, homodimer; disulfide-linked. Component of a complex, at least composed of TSPAN12, FZD4, LRP5/6 and norrin (NDP). Binds FZD4 with high affinity. Interacts with LRP6 (via Beta-propellers 1 and 2). In terms of tissue distribution, expressed in the outer nuclear, inner nuclear and ganglion cell layers of the retina, and in fetal and adult brain.

It is found in the secreted. Functionally, activates the canonical Wnt signaling pathway through FZD4 and LRP5 coreceptor. Plays a central role in retinal vascularization by acting as a ligand for FZD4 that signals via stabilizing beta-catenin (CTNNB1) and activating LEF/TCF-mediated transcriptional programs. Acts in concert with TSPAN12 to activate FZD4 independently of the Wnt-dependent activation of FZD4, suggesting the existence of a Wnt-independent signaling that also promote accumulation the beta-catenin (CTNNB1). May be involved in a pathway that regulates neural cell differentiation and proliferation. Possible role in neuroectodermal cell-cell interaction. This chain is Norrin (NDP), found in Homo sapiens (Human).